We begin with the raw amino-acid sequence, 132 residues long: Small ribosomal subunit protein uS8 (132 aa).

It belongs to the universal ribosomal protein uS8 family. Part of the 30S ribosomal subunit. Contacts proteins S5 and S12.

In terms of biological role, one of the primary rRNA binding proteins, it binds directly to 16S rRNA central domain where it helps coordinate assembly of the platform of the 30S subunit. The sequence is that of Small ribosomal subunit protein uS8 from Enterococcus faecalis (strain ATCC 700802 / V583).